Reading from the N-terminus, the 585-residue chain is tRNA 5-methylaminomethyl-2-thiouridine biosynthesis bifunctional protein MnmC (585 aa).

Residues 1–236 (MTPDGLYCDP…KRERLEAVWP (236 aa)) are tRNA (mnm(5)s(2)U34)-methyltransferase. The interval 254-585 (LGAGIAGASL…SRRAGQGAAG (332 aa)) is FAD-dependent cmnm(5)s(2)U34 oxidoreductase. Residues 564-585 (EAMAPGRFAERRSRRAGQGAAG) form a disordered region.

The protein in the N-terminal section; belongs to the methyltransferase superfamily. tRNA (mnm(5)s(2)U34)-methyltransferase family. In the C-terminal section; belongs to the DAO family. It depends on FAD as a cofactor.

It localises to the cytoplasm. It catalyses the reaction 5-aminomethyl-2-thiouridine(34) in tRNA + S-adenosyl-L-methionine = 5-methylaminomethyl-2-thiouridine(34) in tRNA + S-adenosyl-L-homocysteine + H(+). Catalyzes the last two steps in the biosynthesis of 5-methylaminomethyl-2-thiouridine (mnm(5)s(2)U) at the wobble position (U34) in tRNA. Catalyzes the FAD-dependent demodification of cmnm(5)s(2)U34 to nm(5)s(2)U34, followed by the transfer of a methyl group from S-adenosyl-L-methionine to nm(5)s(2)U34, to form mnm(5)s(2)U34. The polypeptide is tRNA 5-methylaminomethyl-2-thiouridine biosynthesis bifunctional protein MnmC (Maricaulis maris (strain MCS10) (Caulobacter maris)).